The chain runs to 489 residues: Acetyl-coenzyme A carboxylase carboxyl transferase subunit beta, chloroplastic (489 aa).

One can recognise a CoA carboxyltransferase N-terminal domain in the interval 225-489 (LWIQCDNCYG…FFPLNKTEIK (265 aa)). Cys229, Cys232, Cys245, and Cys248 together coordinate Zn(2+). The C4-type zinc finger occupies 229–248 (CDNCYGLMYKKVEMNVCEEC).

Belongs to the AccD/PCCB family. As to quaternary structure, acetyl-CoA carboxylase is a heterohexamer composed of biotin carboxyl carrier protein, biotin carboxylase and 2 subunits each of ACCase subunit alpha and ACCase plastid-coded subunit beta (accD). Zn(2+) serves as cofactor.

It localises to the plastid. The protein resides in the chloroplast stroma. It catalyses the reaction N(6)-carboxybiotinyl-L-lysyl-[protein] + acetyl-CoA = N(6)-biotinyl-L-lysyl-[protein] + malonyl-CoA. Its pathway is lipid metabolism; malonyl-CoA biosynthesis; malonyl-CoA from acetyl-CoA: step 1/1. Functionally, component of the acetyl coenzyme A carboxylase (ACC) complex. Biotin carboxylase (BC) catalyzes the carboxylation of biotin on its carrier protein (BCCP) and then the CO(2) group is transferred by the transcarboxylase to acetyl-CoA to form malonyl-CoA. The protein is Acetyl-coenzyme A carboxylase carboxyl transferase subunit beta, chloroplastic of Draba nemorosa (Woodland whitlowgrass).